Reading from the N-terminus, the 228-residue chain is LHFPL tetraspan subfamily member 2 protein (228 aa).

The next 4 helical transmembrane spans lie at Met11–Ala31, Ile102–Met122, Ile132–Ile152, and Leu181–Phe201.

Belongs to the LHFP family. In terms of tissue distribution, expressed in all tissues and cell lines examined except brain and peripheral blood leukocytes.

The protein resides in the membrane. In terms of biological role, plays a role in female and male fertility. Involved in distal reproductive tract development. This Homo sapiens (Human) protein is LHFPL tetraspan subfamily member 2 protein.